The primary structure comprises 244 residues: 1-(5-phosphoribosyl)-5-[(5-phosphoribosylamino)methylideneamino] imidazole-4-carboxamide isomerase (244 aa).

Residue Asp11 is the Proton acceptor of the active site. Asp132 serves as the catalytic Proton donor.

Belongs to the HisA/HisF family.

Its subcellular location is the cytoplasm. It carries out the reaction 1-(5-phospho-beta-D-ribosyl)-5-[(5-phospho-beta-D-ribosylamino)methylideneamino]imidazole-4-carboxamide = 5-[(5-phospho-1-deoxy-D-ribulos-1-ylimino)methylamino]-1-(5-phospho-beta-D-ribosyl)imidazole-4-carboxamide. Its pathway is amino-acid biosynthesis; L-histidine biosynthesis; L-histidine from 5-phospho-alpha-D-ribose 1-diphosphate: step 4/9. The protein is 1-(5-phosphoribosyl)-5-[(5-phosphoribosylamino)methylideneamino] imidazole-4-carboxamide isomerase of Sphingopyxis alaskensis (strain DSM 13593 / LMG 18877 / RB2256) (Sphingomonas alaskensis).